Reading from the N-terminus, the 336-residue chain is 4-hydroxythreonine-4-phosphate dehydrogenase (336 aa).

T140 is a binding site for substrate. Positions 171, 216, and 271 each coordinate a divalent metal cation. Substrate-binding residues include K279, N288, and R297.

The protein belongs to the PdxA family. Homodimer. Requires Zn(2+) as cofactor. Mg(2+) serves as cofactor. Co(2+) is required as a cofactor.

Its subcellular location is the cytoplasm. It carries out the reaction 4-(phosphooxy)-L-threonine + NAD(+) = 3-amino-2-oxopropyl phosphate + CO2 + NADH. It participates in cofactor biosynthesis; pyridoxine 5'-phosphate biosynthesis; pyridoxine 5'-phosphate from D-erythrose 4-phosphate: step 4/5. In terms of biological role, catalyzes the NAD(P)-dependent oxidation of 4-(phosphooxy)-L-threonine (HTP) into 2-amino-3-oxo-4-(phosphooxy)butyric acid which spontaneously decarboxylates to form 3-amino-2-oxopropyl phosphate (AHAP). The polypeptide is 4-hydroxythreonine-4-phosphate dehydrogenase (Erythrobacter litoralis (strain HTCC2594)).